We begin with the raw amino-acid sequence, 388 residues long: Trans-enoyl reductase tenC (388 aa).

Residue 51–54 coordinates NADP(+); the sequence is VDGK. 142-149 provides a ligand contact to substrate; that stretch reads VGVASVGM. NADP(+) contacts are provided by residues 219–222, Tyr237, and 284–285; these read SSES and LD. 304-308 contributes to the substrate binding site; that stretch reads SFTQF. Position 373-374 (373-374) interacts with NADP(+); that stretch reads IK.

The protein belongs to the zinc-containing alcohol dehydrogenase family. As to quaternary structure, monomer.

Its pathway is secondary metabolite biosynthesis. Trans-enoyl reductase; part of the gene cluster that mediates the biosynthesis of tenellin-type 2-pyridones, iron-chelating compounds involved in iron stress tolerance, competition with the natural competitor fungus Metarhizium robertsii and insect hosts infection. TenC collaborates with the hybrid PKS-NRPS synthetase tenS to catalyze the assembly of the polyketide-amino acid backbone, since tenS lacks a designated enoylreductase (ER) domain. Upon formation of the polyketide backbone on the thiotemplate of tenS, the triketide is transferred to the NRPS module and linked to tyrosine to produce the pyrrolidine-2-dione intermediates, including pretellinin A, 11-hydropretellenin A, 12-hydropretellenin A, 13-hydropretellenin A, 14-hydropretellenin A, 12-oxopretellenin A and prototellinin D. The pathway begins with the assembly of the polyketide-amino acid backbone by the hybrid PKS-NRPS tenS with the help of the enoyl reductase tenC. These enzymes catalyze the synthesis of the pyrrolidine-2-dione intermediates pretellinin A, 11-hydropretellenin A, 12-hydropretellenin A, 13-hydropretellenin A, 14-hydropretellenin A, 12-oxopretellenin A and prototellinin D. The cytochrome P450 monooxygenase tenA then catalyzes an oxidative ring expansion of pretenellin A and 14-hydropretellenin A to form the 2-pyridone core, leading to pretenellin B and pyridovericin, respectively. The cytochrome P450 monooxygenase tenB is then required for the selective N-hydroxylation of the 2-pyridone nitrogen of yield tellinin and 15-hydroxytellenin (15-HT), respectively. The UDP-glucosyltransferase GT1 and the methyltransferase MT1, located outside the tenS gene cluster, contribute to the stepwise glycosylation and methylation of 15-HT to obtain the glycoside pyridovericin-N-O-(4-O-methyl-beta-D-glucopyranoside) (PMGP). Additional related compounds such as 1-O-methyl-15-HT, (8Z)-1-O-methyl-15-HT, and O-methyltenellin A are also produced but the enzymes involved in their biosynthesis have still to be determined. This is Trans-enoyl reductase tenC from Beauveria bassiana (White muscardine disease fungus).